Consider the following 449-residue polypeptide: Tubulin alpha-2 chain (449 aa).

Glutamine 11 lines the GTP pocket. Position 40 is an N6-acetyllysine (lysine 40). Residues glutamate 71, serine 140, glycine 144, threonine 145, threonine 179, asparagine 206, and asparagine 228 each coordinate GTP. Glutamate 71 contributes to the Mg(2+) binding site. Residue glutamate 254 is part of the active site.

This sequence belongs to the tubulin family. As to quaternary structure, dimer of alpha and beta chains. A typical microtubule is a hollow water-filled tube with an outer diameter of 25 nm and an inner diameter of 15 nM. Alpha-beta heterodimers associate head-to-tail to form protofilaments running lengthwise along the microtubule wall with the beta-tubulin subunit facing the microtubule plus end conferring a structural polarity. Microtubules usually have 13 protofilaments but different protofilament numbers can be found in some organisms and specialized cells. Mg(2+) serves as cofactor. In terms of processing, undergoes a tyrosination/detyrosination cycle, the cyclic removal and re-addition of a C-terminal tyrosine residue by the enzymes tubulin tyrosine carboxypeptidase (TTCP) and tubulin tyrosine ligase (TTL), respectively. Acetylation of alpha chains at Lys-40 stabilizes microtubules and affects affinity and processivity of microtubule motors. This modification has a role in multiple cellular functions, ranging from cell motility, cell cycle progression or cell differentiation to intracellular trafficking and signaling. During the early stages of oogenesis lky/Alpha-tubulin N-acetyltransferase 2 is the main acetyltransferase responsible for Lys-40 acetylation in germline cells while Atat/alpha-tubulin N-acetyltransferase 1 is the main acetyltransferase responsible for Lys-40 acetylation in somatic cells.

Its subcellular location is the cytoplasm. The protein resides in the cytoskeleton. It carries out the reaction GTP + H2O = GDP + phosphate + H(+). Tubulin is the major constituent of microtubules, a cylinder consisting of laterally associated linear protofilaments composed of alpha- and beta-tubulin heterodimers. Microtubules grow by the addition of GTP-tubulin dimers to the microtubule end, where a stabilizing cap forms. Below the cap, tubulin dimers are in GDP-bound state, owing to GTPase activity of alpha-tubulin. The sequence is that of Tubulin alpha-2 chain (alphaTub85E) from Drosophila melanogaster (Fruit fly).